Here is a 1551-residue protein sequence, read N- to C-terminus: Serine/threonine-protein kinase MRCK gamma (1551 aa).

Residues 71-337 enclose the Protein kinase domain; that stretch reads FEILKVIGRG…LDDFRNHPFF (267 aa). ATP-binding positions include 77–85 and K100; that span reads IGRGAFGEV. D195 (proton acceptor) is an active-site residue. S216 and S228 each carry phosphoserine; by autocatalysis. A Phosphothreonine; by autocatalysis modification is found at T234. An AGC-kinase C-terminal domain is found at 338–408; the sequence is EGVDWERLAS…TSGSHSPESS (71 aa). 2 coiled-coil regions span residues 406 to 678 and 730 to 802; these read ESSS…SNWE and KARR…RARG. Disordered regions lie at residues 467 to 486, 655 to 675, 801 to 849, and 863 to 886; these read KASL…QDSD, ELAQ…ETES, RGPV…PEGR, and TANT…PRSF. Basic and acidic residues predominate over residues 655–674; the sequence is ELAQEQESKQRLEGERRETE. Positions 835–849 are enriched in basic and acidic residues; the sequence is ATRHGGEPDLRPEGR. A Phorbol-ester/DAG-type zinc finger spans residues 878–927; it reads SHTLRPRSFPSPTKCLRCTSLMLGLGRQGLGCDACGYFCHTTCAPQAPPC. One can recognise a PH domain in the interval 947–1066; it reads GTAYEGFLSV…WLQVLGELQR (120 aa). One can recognise a CNH domain in the interval 1092 to 1366; it reads LPHTLCAAIL…RPLNPEGSLF (275 aa). A CRIB domain is found at 1437–1450; the sequence is ISPPTNFNHLVHVG. A disordered region spans residues 1442 to 1551; it reads NFNHLVHVGP…PLSPELESSP (110 aa). Basic and acidic residues predominate over residues 1457 to 1470; that stretch reads GARDKSPAPEEKGR. S1482 is subject to Phosphoserine. Residues 1511 to 1533 are compositionally biased toward polar residues; the sequence is TSLSSESVSCPQGSLSPATSLMQ. Residues 1540–1551 are compositionally biased toward low complexity; the sequence is SLPLSPELESSP.

This sequence belongs to the protein kinase superfamily. AGC Ser/Thr protein kinase family. DMPK subfamily. In terms of assembly, homodimer and homotetramer via the coiled coil regions. Interacts tightly with GTP-bound but not GDP-bound CDC42. Mg(2+) is required as a cofactor. In terms of tissue distribution, expressed in heart and skeletal muscle.

Its subcellular location is the cytoplasm. The enzyme catalyses L-seryl-[protein] + ATP = O-phospho-L-seryl-[protein] + ADP + H(+). It catalyses the reaction L-threonyl-[protein] + ATP = O-phospho-L-threonyl-[protein] + ADP + H(+). Its activity is regulated as follows. Maintained in an inactive, closed conformation by an interaction between the kinase domain and the negative autoregulatory C-terminal coiled-coil region. Agonist binding to the phorbol ester binding site disrupts this, releasing the kinase domain to allow N-terminus-mediated dimerization and kinase activation by transautophosphorylation. Its function is as follows. May act as a downstream effector of CDC42 in cytoskeletal reorganization. Contributes to the actomyosin contractility required for cell invasion, through the regulation of MYPT1 and thus MLC2 phosphorylation. In Homo sapiens (Human), this protein is Serine/threonine-protein kinase MRCK gamma.